Reading from the N-terminus, the 548-residue chain is Aromatic ammonia-lyase (548 aa).

Residue tyrosine 55 is the Proton donor/acceptor of the active site. The segment at residues 144 to 146 is a cross-link (5-imidazolinone (Ala-Gly)); it reads ASG. At serine 145 the chain carries 2,3-didehydroalanine (Ser). Asparagine 200, glutamine 288, arginine 294, asparagine 324, lysine 396, glutamate 425, and asparagine 428 together coordinate (E)-cinnamate.

This sequence belongs to the PAL/histidase family. As to quaternary structure, homotetramer. Contains an active site 4-methylidene-imidazol-5-one (MIO), which is formed autocatalytically by cyclization and dehydration of residues Ala-Ser-Gly.

It carries out the reaction L-phenylalanine = (E)-cinnamate + NH4(+). The enzyme catalyses L-tyrosine = (E)-4-coumarate + NH4(+). The catalysed reaction is 3,4-dimethoxy-L-phenylalanine = 3,4-dimethoxy-(E)-cinnamate + NH4(+). Its pathway is phenylpropanoid metabolism; trans-cinnamate biosynthesis; trans-cinnamate from L-phenylalanine: step 1/1. Aromatic ammonia-lyase (AAL) that shows reduced activity to catalyze the non-oxidative ammonia elimination from the canonical AAL substrates L-Phe and L-Tyr, contrasted by its pronounced efficiency towards substrates with electron-donor aromatic substituents such as 3,4-dimethoxy-L-phenylalanine. Is also able to catalyze the reverse reaction in vitro, i.e. the ammonia addition reaction to cinnamate derivatives, producing enantiopure phenylalanine derivatives. Shows no activity with L-His. This Loktanella atrilutea protein is Aromatic ammonia-lyase.